The chain runs to 218 residues: Ras-related protein R-Ras (218 aa).

Residues 1 to 30 (MSSGAASGTGRGRPRGGGPGPRDPPPGETH) form a disordered region. Over residues 7 to 20 (SGTGRGRPRGGGPG) the composition is skewed to gly residues. 36-44 (GGGGVGKSA) provides a ligand contact to GTP. An Effector region motif is present at residues 58–66 (YDPTIEDSY). Residues 83–87 (DTAGQ), 142–145 (NKAD), and 172–174 (SAK) each bind GTP. Cysteine 215 carries the cysteine methyl ester modification. Cysteine 215 is lipidated: S-geranylgeranyl cysteine. Residues 216 to 218 (VLL) constitute a propeptide, removed in mature form.

It belongs to the small GTPase superfamily. Ras family. In terms of assembly, interacts with PLCE1. Interacts (active GTP-bound form preferentially) with RGS14. Interacts with OSBPL3. Interacts with ZDHHC19. Post-translationally, S-palmitoylated by ZDHHC19, leading to increased association with membranes and with rafts/caveolae as well as enhanced cell viability.

It is found in the cell membrane. The catalysed reaction is GTP + H2O = GDP + phosphate + H(+). In terms of biological role, GTP-binding protein with GTPase activity, likely involved in the regulation of MAPK signaling pathway and thereby controlling multiple cellular processes. Regulates the organization of the actin cytoskeleton. With OSPBL3, modulates integrin beta-1 (ITGB1) activity. This chain is Ras-related protein R-Ras (Rras), found in Rattus norvegicus (Rat).